The following is a 146-amino-acid chain: Large ribosomal subunit protein uL15 (146 aa).

The segment covering 1–10 (MTIKLHDLKP) has biased composition (basic and acidic residues). Residues 1–52 (MTIKLHDLKPARGSKTPRTRVGRGEGSKGKTAGRGTKGTKARKNVPVTFEGG) form a disordered region.

Belongs to the universal ribosomal protein uL15 family. In terms of assembly, part of the 50S ribosomal subunit.

In terms of biological role, binds to the 23S rRNA. The chain is Large ribosomal subunit protein uL15 from Mycolicibacterium paratuberculosis (strain ATCC BAA-968 / K-10) (Mycobacterium paratuberculosis).